The sequence spans 254 residues: Phosphoribosylaminoimidazole-succinocarboxamide synthase (254 aa).

Belongs to the SAICAR synthetase family.

The catalysed reaction is 5-amino-1-(5-phospho-D-ribosyl)imidazole-4-carboxylate + L-aspartate + ATP = (2S)-2-[5-amino-1-(5-phospho-beta-D-ribosyl)imidazole-4-carboxamido]succinate + ADP + phosphate + 2 H(+). It participates in purine metabolism; IMP biosynthesis via de novo pathway; 5-amino-1-(5-phospho-D-ribosyl)imidazole-4-carboxamide from 5-amino-1-(5-phospho-D-ribosyl)imidazole-4-carboxylate: step 1/2. This chain is Phosphoribosylaminoimidazole-succinocarboxamide synthase, found in Acidiphilium cryptum (strain JF-5).